A 276-amino-acid polypeptide reads, in one-letter code: Dermonecrotic toxin LspiSicTox-betaIE4ii (276 aa).

H5 is a catalytic residue. Positions 25 and 27 each coordinate Mg(2+). Catalysis depends on H41, which acts as the Nucleophile. Disulfide bonds link C45/C51 and C47/C189. D85 is a Mg(2+) binding site.

It belongs to the arthropod phospholipase D family. Class II subfamily. Requires Mg(2+) as cofactor. As to expression, expressed by the venom gland.

Its subcellular location is the secreted. It catalyses the reaction an N-(acyl)-sphingosylphosphocholine = an N-(acyl)-sphingosyl-1,3-cyclic phosphate + choline. The enzyme catalyses an N-(acyl)-sphingosylphosphoethanolamine = an N-(acyl)-sphingosyl-1,3-cyclic phosphate + ethanolamine. The catalysed reaction is a 1-acyl-sn-glycero-3-phosphocholine = a 1-acyl-sn-glycero-2,3-cyclic phosphate + choline. It carries out the reaction a 1-acyl-sn-glycero-3-phosphoethanolamine = a 1-acyl-sn-glycero-2,3-cyclic phosphate + ethanolamine. Its function is as follows. Dermonecrotic toxins cleave the phosphodiester linkage between the phosphate and headgroup of certain phospholipids (sphingolipid and lysolipid substrates), forming an alcohol (often choline) and a cyclic phosphate. This toxin acts on sphingomyelin (SM). It may also act on ceramide phosphoethanolamine (CPE), lysophosphatidylcholine (LPC) and lysophosphatidylethanolamine (LPE), but not on lysophosphatidylserine (LPS), and lysophosphatidylglycerol (LPG). It acts by transphosphatidylation, releasing exclusively cyclic phosphate products as second products. Induces dermonecrosis, hemolysis, increased vascular permeability, edema, inflammatory response, and platelet aggregation. The chain is Dermonecrotic toxin LspiSicTox-betaIE4ii from Loxosceles spinulosa (Recluse spider).